Reading from the N-terminus, the 38-residue chain is Very early lactation protein (38 aa).

As to quaternary structure, homodimer. O-glycosylated. Contains sialic acid residues. In terms of tissue distribution, found in the whey fraction of milk (at protein level).

It is found in the secreted. In Trichosurus vulpecula (Brush-tailed possum), this protein is Very early lactation protein.